The sequence spans 82 residues: Exodeoxyribonuclease 7 small subunit (82 aa).

It belongs to the XseB family. In terms of assembly, heterooligomer composed of large and small subunits.

The protein resides in the cytoplasm. It carries out the reaction Exonucleolytic cleavage in either 5'- to 3'- or 3'- to 5'-direction to yield nucleoside 5'-phosphates.. In terms of biological role, bidirectionally degrades single-stranded DNA into large acid-insoluble oligonucleotides, which are then degraded further into small acid-soluble oligonucleotides. The chain is Exodeoxyribonuclease 7 small subunit from Pectobacterium atrosepticum (strain SCRI 1043 / ATCC BAA-672) (Erwinia carotovora subsp. atroseptica).